A 443-amino-acid chain; its full sequence is Putative cytochrome bd menaquinol oxidase subunit I (443 aa).

The next 9 membrane-spanning stretches (helical) occupy residues Ile-19–Tyr-39, Val-60–Trp-80, Leu-93–Val-113, Ile-125–Val-145, Phe-176–Ala-196, Ala-219–His-239, Leu-322–Val-342, Leu-357–Phe-377, and Val-405–Leu-425. Heme b is bound at residue His-182.

Belongs to the cytochrome ubiquinol oxidase subunit 1 family. It depends on heme b as a cofactor.

The protein resides in the cell membrane. Its function is as follows. May have a role in sporulation. Can compensate for the loss of cytochrome aa3. The sequence is that of Putative cytochrome bd menaquinol oxidase subunit I (ythA) from Bacillus subtilis (strain 168).